The primary structure comprises 92 residues: Small ribosomal subunit protein uS19 (92 aa).

The protein belongs to the universal ribosomal protein uS19 family.

Its function is as follows. Protein S19 forms a complex with S13 that binds strongly to the 16S ribosomal RNA. This chain is Small ribosomal subunit protein uS19, found in Corynebacterium kroppenstedtii (strain DSM 44385 / JCM 11950 / CIP 105744 / CCUG 35717).